The chain runs to 317 residues: Beta-ketoacyl-[acyl-carrier-protein] synthase III (317 aa).

Residues C112 and H244 contribute to the active site. The tract at residues 245–249 (QANIR) is ACP-binding. The active site involves N274.

It belongs to the thiolase-like superfamily. FabH family. As to quaternary structure, homodimer.

Its subcellular location is the cytoplasm. It carries out the reaction malonyl-[ACP] + acetyl-CoA + H(+) = 3-oxobutanoyl-[ACP] + CO2 + CoA. It participates in lipid metabolism; fatty acid biosynthesis. Functionally, catalyzes the condensation reaction of fatty acid synthesis by the addition to an acyl acceptor of two carbons from malonyl-ACP. Catalyzes the first condensation reaction which initiates fatty acid synthesis and may therefore play a role in governing the total rate of fatty acid production. Possesses both acetoacetyl-ACP synthase and acetyl transacylase activities. Its substrate specificity determines the biosynthesis of branched-chain and/or straight-chain of fatty acids. This is Beta-ketoacyl-[acyl-carrier-protein] synthase III from Rickettsia felis (strain ATCC VR-1525 / URRWXCal2) (Rickettsia azadi).